Reading from the N-terminus, the 683-residue chain is DNA-directed RNA polymerase subunit beta' (683 aa).

Zn(2+)-binding residues include Cys-69, Cys-71, Cys-87, and Cys-90. Mg(2+) contacts are provided by Asp-492, Asp-494, and Asp-496.

The protein belongs to the RNA polymerase beta' chain family. RpoC1 subfamily. As to quaternary structure, in plastids the minimal PEP RNA polymerase catalytic core is composed of four subunits: alpha, beta, beta', and beta''. When a (nuclear-encoded) sigma factor is associated with the core the holoenzyme is formed, which can initiate transcription. Mg(2+) is required as a cofactor. Zn(2+) serves as cofactor.

The protein localises to the plastid. The protein resides in the chloroplast. It carries out the reaction RNA(n) + a ribonucleoside 5'-triphosphate = RNA(n+1) + diphosphate. DNA-dependent RNA polymerase catalyzes the transcription of DNA into RNA using the four ribonucleoside triphosphates as substrates. The sequence is that of DNA-directed RNA polymerase subunit beta' from Coffea arabica (Arabian coffee).